A 285-amino-acid polypeptide reads, in one-letter code: Hypersensitive-induced reaction 1 protein (285 aa).

The N-myristoyl glycine moiety is linked to residue Gly-2. A coiled-coil region spans residues 118-190 (FEQKNEIAKS…EKILQIKRAE (73 aa)).

As to quaternary structure, homo- and heterodimer. Interacts with LRR1 (via LRR domain). In terms of tissue distribution, constitutively expressed in stems, roots and flowers, but not in leaves and fruits.

Positive regulator of hypersensitive response (HR)-like cell death. May be involved in potassium ion channel regulation. The sequence is that of Hypersensitive-induced reaction 1 protein from Capsicum annuum (Capsicum pepper).